A 183-amino-acid chain; its full sequence is MALVQSRTFPHLNTPLSPILSSLHAPSSLFIRREIRPVAAPFSSSTAGNLPFSPLTRPRKLLCPPPRGKFVREDYLVKKLSAQELQELVKGDRKVPLIVDFYATWCGPCILMAQELEMLAVEYESNAIIVKVDTDDEYEFARDMQVRGLPTLFFISPDPSKDAIRTEGLIPLQMMHDIIDNEM.

A chloroplast-targeting transit peptide spans 1–81; sequence MALVQSRTFP…REDYLVKKLS (81 aa). The Thioredoxin domain occupies 82–183; sequence AQELQELVKG…MMHDIIDNEM (102 aa). Active-site nucleophile residues include C106 and C109. A disulfide bridge links C106 with C109.

The protein belongs to the thioredoxin family. Plant CITRX-type subfamily. As to quaternary structure, interacts with FLN1 and FLN2. Interacts with MRL7.

It localises to the plastid. The protein resides in the chloroplast. Its function is as follows. Thiol-disulfide oxidoreductase that plays a role in proper chloroplast development, most likely through regulating plastid-encoded polymerase (PEP) dependent chloroplast transcription. Acts as a component of the transcriptionally active plastid chromosome that is required for plastid gene expression. This chain is Thioredoxin-like protein CITRX, chloroplastic, found in Arabidopsis thaliana (Mouse-ear cress).